Reading from the N-terminus, the 200-residue chain is Phospholipase A2 inhibitor gamma subunit A (200 aa).

A signal peptide spans 1 to 19 (MKSLHTICLLFIFIARGNS). Disulfide bonds link C22–C46, C25–C32, C39–C67, C73–C94, C95–C100, C118–C143, C136–C165, and C169–C191. N176 is a glycosylation site (N-linked (GlcNAc...) asparagine).

The protein belongs to the CNF-like-inhibitor family. Occurs as a mixture of oligomers. Tetrameric arrangement appears to be the predominant quaternary structure. Expressed by the liver.

It is found in the secreted. Functionally, inhibits the enzymatic activity of phospholipase A2 (PA2). This Gloydius brevicaudus siniticus (Chinese mamushi) protein is Phospholipase A2 inhibitor gamma subunit A.